The primary structure comprises 958 residues: Glycine dehydrogenase (decarboxylating) (958 aa).

Position 708 is an N6-(pyridoxal phosphate)lysine (Lys-708).

This sequence belongs to the GcvP family. The glycine cleavage system is composed of four proteins: P, T, L and H. Requires pyridoxal 5'-phosphate as cofactor.

It catalyses the reaction N(6)-[(R)-lipoyl]-L-lysyl-[glycine-cleavage complex H protein] + glycine + H(+) = N(6)-[(R)-S(8)-aminomethyldihydrolipoyl]-L-lysyl-[glycine-cleavage complex H protein] + CO2. The glycine cleavage system catalyzes the degradation of glycine. The P protein binds the alpha-amino group of glycine through its pyridoxal phosphate cofactor; CO(2) is released and the remaining methylamine moiety is then transferred to the lipoamide cofactor of the H protein. In Proteus mirabilis (strain HI4320), this protein is Glycine dehydrogenase (decarboxylating).